The sequence spans 312 residues: Pre-mRNA-splicing factor 38A (312 aa).

Residues 1-179 are N-terminal protein interaction domain; the sequence is MANRTVKDAH…VLEEAEQLEP (179 aa). Ser11, Ser193, Ser194, Ser209, and Ser226 each carry phosphoserine. The stretch at 170–204 forms a coiled coil; sequence VLEEAEQLEPRVSALEEDMDDVESSEEEEEEDEKL. A disordered region spans residues 181 to 312; sequence VSALEEDMDD…SHKKSRRGNE (132 aa). Over residues 184–202 the composition is skewed to acidic residues; the sequence is LEEDMDDVESSEEEEEEDE. Positions 203 to 224 are enriched in basic and acidic residues; that stretch reads KLERVPSPDHRRRSYRDLDKPR. Basic residues-rich tracts occupy residues 225 to 294 and 301 to 312; these read RSPT…RSHS and KKSHKKSRRGNE.

The protein belongs to the PRP38 family. In terms of assembly, component of the spliceosome B complex. Interacts (via N-terminal interaction domain) with ZMAT2 and MFAP1.

It is found in the nucleus. Its function is as follows. Involved in pre-mRNA splicing as a component of the spliceosome. The polypeptide is Pre-mRNA-splicing factor 38A (PRPF38A) (Bos taurus (Bovine)).